The primary structure comprises 429 residues: Arginine biosynthesis bifunctional protein ArgJ (429 aa).

Positions 181, 207, 218, 302, 424, and 429 each coordinate substrate. Catalysis depends on Thr218, which acts as the Nucleophile.

This sequence belongs to the ArgJ family. As to quaternary structure, heterotetramer of two alpha and two beta chains.

The protein resides in the cytoplasm. The catalysed reaction is N(2)-acetyl-L-ornithine + L-glutamate = N-acetyl-L-glutamate + L-ornithine. The enzyme catalyses L-glutamate + acetyl-CoA = N-acetyl-L-glutamate + CoA + H(+). It functions in the pathway amino-acid biosynthesis; L-arginine biosynthesis; L-ornithine and N-acetyl-L-glutamate from L-glutamate and N(2)-acetyl-L-ornithine (cyclic): step 1/1. Its pathway is amino-acid biosynthesis; L-arginine biosynthesis; N(2)-acetyl-L-ornithine from L-glutamate: step 1/4. Catalyzes two activities which are involved in the cyclic version of arginine biosynthesis: the synthesis of N-acetylglutamate from glutamate and acetyl-CoA as the acetyl donor, and of ornithine by transacetylation between N(2)-acetylornithine and glutamate. The chain is Arginine biosynthesis bifunctional protein ArgJ from Chlorobium chlorochromatii (strain CaD3).